The sequence spans 426 residues: Histidine--tRNA ligase (426 aa).

Belongs to the class-II aminoacyl-tRNA synthetase family. As to quaternary structure, homodimer.

It is found in the cytoplasm. It catalyses the reaction tRNA(His) + L-histidine + ATP = L-histidyl-tRNA(His) + AMP + diphosphate + H(+). The polypeptide is Histidine--tRNA ligase (Streptococcus thermophilus (strain ATCC BAA-491 / LMD-9)).